Here is a 180-residue protein sequence, read N- to C-terminus: Large ribosomal subunit protein uL5 (180 aa).

This sequence belongs to the universal ribosomal protein uL5 family. Part of the 50S ribosomal subunit; part of the 5S rRNA/L5/L18/L25 subcomplex. Contacts the 5S rRNA and the P site tRNA. Forms a bridge to the 30S subunit in the 70S ribosome.

In terms of biological role, this is one of the proteins that bind and probably mediate the attachment of the 5S RNA into the large ribosomal subunit, where it forms part of the central protuberance. In the 70S ribosome it contacts protein S13 of the 30S subunit (bridge B1b), connecting the 2 subunits; this bridge is implicated in subunit movement. Contacts the P site tRNA; the 5S rRNA and some of its associated proteins might help stabilize positioning of ribosome-bound tRNAs. This chain is Large ribosomal subunit protein uL5, found in Mycoplasma mycoides subsp. mycoides SC (strain CCUG 32753 / NCTC 10114 / PG1).